A 464-amino-acid chain; its full sequence is V-type ATP synthase beta chain (464 aa).

This sequence belongs to the ATPase alpha/beta chains family.

Its function is as follows. Produces ATP from ADP in the presence of a proton gradient across the membrane. The V-type beta chain is a regulatory subunit. This is V-type ATP synthase beta chain from Streptococcus sanguinis (strain SK36).